Consider the following 25-residue polypeptide: GLWSKIKEAAKTAGKAAMGFVDEMV.

V25 bears the Valine amide mark.

Expressed by the skin glands.

It localises to the secreted. In terms of biological role, has antimicrobial activity. The protein is Dermaseptin-5.2TR of Phyllomedusa trinitatis (Trinidad leaf frog).